The primary structure comprises 129 residues: Large ribosomal subunit protein uL14m (129 aa).

It belongs to the universal ribosomal protein uL14 family.

It localises to the mitochondrion. The chain is Large ribosomal subunit protein uL14m (RPL14) from Acanthamoeba castellanii (Amoeba).